A 221-amino-acid polypeptide reads, in one-letter code: Thiamine-phosphate synthase (221 aa).

4-amino-2-methyl-5-(diphosphooxymethyl)pyrimidine contacts are provided by residues 44 to 48 and asparagine 80; that span reads QLRLK. Residues aspartate 81 and aspartate 100 each contribute to the Mg(2+) site. Threonine 119 is a 4-amino-2-methyl-5-(diphosphooxymethyl)pyrimidine binding site. 146 to 148 serves as a coordination point for 2-[(2R,5Z)-2-carboxy-4-methylthiazol-5(2H)-ylidene]ethyl phosphate; sequence TTT. Lysine 149 serves as a coordination point for 4-amino-2-methyl-5-(diphosphooxymethyl)pyrimidine. Glycine 176 contributes to the 2-[(2R,5Z)-2-carboxy-4-methylthiazol-5(2H)-ylidene]ethyl phosphate binding site.

This sequence belongs to the thiamine-phosphate synthase family. It depends on Mg(2+) as a cofactor.

The catalysed reaction is 2-[(2R,5Z)-2-carboxy-4-methylthiazol-5(2H)-ylidene]ethyl phosphate + 4-amino-2-methyl-5-(diphosphooxymethyl)pyrimidine + 2 H(+) = thiamine phosphate + CO2 + diphosphate. It carries out the reaction 2-(2-carboxy-4-methylthiazol-5-yl)ethyl phosphate + 4-amino-2-methyl-5-(diphosphooxymethyl)pyrimidine + 2 H(+) = thiamine phosphate + CO2 + diphosphate. It catalyses the reaction 4-methyl-5-(2-phosphooxyethyl)-thiazole + 4-amino-2-methyl-5-(diphosphooxymethyl)pyrimidine + H(+) = thiamine phosphate + diphosphate. The protein operates within cofactor biosynthesis; thiamine diphosphate biosynthesis; thiamine phosphate from 4-amino-2-methyl-5-diphosphomethylpyrimidine and 4-methyl-5-(2-phosphoethyl)-thiazole: step 1/1. Condenses 4-methyl-5-(beta-hydroxyethyl)thiazole monophosphate (THZ-P) and 2-methyl-4-amino-5-hydroxymethyl pyrimidine pyrophosphate (HMP-PP) to form thiamine monophosphate (TMP). This Hyphomonas neptunium (strain ATCC 15444) protein is Thiamine-phosphate synthase.